Reading from the N-terminus, the 411-residue chain is Serine/threonine-protein kinase 54 (411 aa).

2 positions are modified to phosphoserine; by PHOT1: Ser-43 and Ser-45. The Protein kinase domain occupies Leu-108 to Ile-385. Residues Ile-114–Val-122 and Lys-135 contribute to the ATP site. The active-site Proton acceptor is the Asp-253. Thr-286 is modified (phosphothreonine).

The protein belongs to the protein kinase superfamily. Ser/Thr protein kinase family. In terms of assembly, binds to CBC2. Associates with PHOT2, BLUS1 and PM H(+)-ATPase (e.g. AHA1). Autophosphorylated. Phosphorylated in guard cells by HT1 in response to low CO(2) concentrations and by PHOT1 after blue light (BL) exposure. In terms of tissue distribution, expressed in guard cells.

It is found in the cytoplasm. It localises to the cytosol. It catalyses the reaction L-seryl-[protein] + ATP = O-phospho-L-seryl-[protein] + ADP + H(+). The catalysed reaction is L-threonyl-[protein] + ATP = O-phospho-L-threonyl-[protein] + ADP + H(+). Its function is as follows. Serine/threonine protein kinase that phosphorylates proteins on serine and threonine residues. Collectively with CBC2, acts as a negative regulator of stomatal opening, probably via the inhibition of plasma membrane-type ATPases (AHA1 and AHA2) activity in guard cells, but in an abscisic acid (ABA)-independent manner. However, at low concentrations of CO(2), together with CBC2, stimulates stomatal opening via the inhibition of S-type anion channels in response to blue light (BL) and red light (RL), thus being a key component to maximize photosynthesis in the light under low CO(2) conditions. Required for temperature decrease in leaves. Downstream target of HIGH LEAF TEMPERATURE1 (HT1) during low CO(2)-induced stomatal opening. Also functions in the signaling pathways of phototropins. The polypeptide is Serine/threonine-protein kinase 54 (Arabidopsis thaliana (Mouse-ear cress)).